Reading from the N-terminus, the 878-residue chain is Fanconi-associated nuclease 1 homolog (878 aa).

A UBZ4-type zinc finger spans residues 32-59 (GKTCPLCNIKFSLASYRSHMNVCKVADD). The Zn(2+) site is built by C35, C38, H50, and C54. The disordered stretch occupies residues 88–180 (ENSGQEIPVN…QKSQSESQEA (93 aa)). The span at 142–161 (SEVRSVEKEIKKSPVWENRR) shows a compositional bias: basic and acidic residues. The span at 168–179 (QNSQKSQSESQE) shows a compositional bias: low complexity. 4 residues coordinate Mn(2+): E695, D823, E838, and V839. The VRR-NUC domain maps to 757 to 870 (QETIEDNIRR…GIKAEVCHVE (114 aa)).

It belongs to the FAN1 family. It depends on Mn(2+) as a cofactor. The cofactor is Mg(2+).

The protein resides in the nucleus. It catalyses the reaction Hydrolytically removes 5'-nucleotides successively from the 3'-hydroxy termini of 3'-hydroxy-terminated oligonucleotides.. Nuclease required for the repair of DNA interstrand cross-links (ICL). Acts as a 5'-3' exonuclease that anchors at a cut end of DNA and cleaves DNA successively at every third nucleotide, allowing to excise an ICL from one strand through flanking incisions. The protein is Fanconi-associated nuclease 1 homolog (fan-1) of Caenorhabditis briggsae.